The primary structure comprises 93 residues: NAD(P)H-quinone oxidoreductase subunit 4L, chloroplastic (93 aa).

2 helical membrane passes run 1–21 (MLEH…SGLI) and 60–80 (IFAI…LSIA).

This sequence belongs to the complex I subunit 4L family. In terms of assembly, NDH is composed of at least 16 different subunits, 5 of which are encoded in the nucleus.

The protein resides in the plastid. It is found in the chloroplast thylakoid membrane. The enzyme catalyses a plastoquinone + NADH + (n+1) H(+)(in) = a plastoquinol + NAD(+) + n H(+)(out). The catalysed reaction is a plastoquinone + NADPH + (n+1) H(+)(in) = a plastoquinol + NADP(+) + n H(+)(out). NDH shuttles electrons from NAD(P)H:plastoquinone, via FMN and iron-sulfur (Fe-S) centers, to quinones in the photosynthetic chain and possibly in a chloroplast respiratory chain. The immediate electron acceptor for the enzyme in this species is believed to be plastoquinone. Couples the redox reaction to proton translocation, and thus conserves the redox energy in a proton gradient. This is NAD(P)H-quinone oxidoreductase subunit 4L, chloroplastic from Anthoceros angustus (Hornwort).